A 450-amino-acid chain; its full sequence is Tubulin alpha-3 chain (450 aa).

Glutamine 11 is a binding site for GTP. The residue at position 40 (lysine 40) is an N6-acetyllysine. Glutamate 71, serine 140, glycine 144, threonine 145, threonine 179, asparagine 206, and asparagine 228 together coordinate GTP. Position 71 (glutamate 71) interacts with Mg(2+). The active site involves glutamate 254.

It belongs to the tubulin family. In terms of assembly, dimer of alpha and beta chains. A typical microtubule is a hollow water-filled tube with an outer diameter of 25 nm and an inner diameter of 15 nM. Alpha-beta heterodimers associate head-to-tail to form protofilaments running lengthwise along the microtubule wall with the beta-tubulin subunit facing the microtubule plus end conferring a structural polarity. Microtubules usually have 13 protofilaments but different protofilament numbers can be found in some organisms and specialized cells. Mg(2+) serves as cofactor. Post-translationally, undergoes a tyrosination/detyrosination cycle, the cyclic removal and re-addition of a C-terminal tyrosine residue by the enzymes tubulin tyrosine carboxypeptidase (TTCP) and tubulin tyrosine ligase (TTL), respectively. In terms of processing, acetylation of alpha chains at Lys-40 stabilizes microtubules and affects affinity and processivity of microtubule motors. This modification has a role in multiple cellular functions, ranging from cell motility, cell cycle progression or cell differentiation to intracellular trafficking and signaling. During the early stages of oogenesis lky/Alpha-tubulin N-acetyltransferase 2 is the main acetyltransferase responsible for Lys-40 acetylation in germline cells while Atat/alpha-tubulin N-acetyltransferase 1 is the main acetyltransferase responsible for Lys-40 acetylation in somatic cells.

The protein localises to the cytoplasm. It is found in the cytoskeleton. It catalyses the reaction GTP + H2O = GDP + phosphate + H(+). Its function is as follows. Tubulin is the major constituent of microtubules, a cylinder consisting of laterally associated linear protofilaments composed of alpha- and beta-tubulin heterodimers. Microtubules grow by the addition of GTP-tubulin dimers to the microtubule end, where a stabilizing cap forms. Below the cap, tubulin dimers are in GDP-bound state, owing to GTPase activity of alpha-tubulin. This is Tubulin alpha-3 chain (alphaTub84D) from Drosophila melanogaster (Fruit fly).